The following is an 839-amino-acid chain: Heat shock 70 kDa protein 4L (839 aa).

Serine 74 and serine 508 each carry phosphoserine. Residues 503–554 show a composition bias toward basic and acidic residues; that stretch reads LEGDHSDAPMETETSFKNENKDNMDKMQVDQEEGHQKCHAEHTPEEEIDHTG. A disordered region spans residues 503–567; it reads LEGDHSDAPM…KSAVSDKQDR (65 aa). At threonine 545 the chain carries Phosphothreonine. At serine 579 the chain carries Phosphoserine. The residue at position 761 (threonine 761) is a Phosphothreonine. The tract at residues 786-839 is disordered; the sequence is IYKPKPKAEVPEDKPKANSEHNGPMDGQSGTETKSDSTKDSSQHTKSSGEMEVD. Composition is skewed to basic and acidic residues over residues 791 to 804 and 818 to 839; these read PKAEVPEDKPKANS and TKSDSTKDSSQHTKSSGEMEVD.

It belongs to the heat shock protein 70 family. In terms of assembly, homodimer.

It is found in the cytoplasm. Its subcellular location is the nucleus. In terms of biological role, possesses chaperone activity in vitro where it inhibits aggregation of citrate synthase. The polypeptide is Heat shock 70 kDa protein 4L (HSPA4L) (Homo sapiens (Human)).